We begin with the raw amino-acid sequence, 248 residues long: Probable transcriptional regulatory protein Pcar_2335 (248 aa).

Belongs to the TACO1 family.

It localises to the cytoplasm. The chain is Probable transcriptional regulatory protein Pcar_2335 from Syntrophotalea carbinolica (strain DSM 2380 / NBRC 103641 / GraBd1) (Pelobacter carbinolicus).